We begin with the raw amino-acid sequence, 172 residues long: Endoribonuclease YbeY (172 aa).

Residues histidine 134, histidine 138, and histidine 144 each contribute to the Zn(2+) site.

This sequence belongs to the endoribonuclease YbeY family. Zn(2+) serves as cofactor.

The protein resides in the cytoplasm. Its function is as follows. Single strand-specific metallo-endoribonuclease involved in late-stage 70S ribosome quality control and in maturation of the 3' terminus of the 16S rRNA. This Burkholderia cenocepacia (strain HI2424) protein is Endoribonuclease YbeY.